We begin with the raw amino-acid sequence, 166 residues long: MTWTTPDLCDRFPEVAVAEPLFRHFGGRTTFSGPIATVRCVEDNSRIRELASTPGDGRVLVVDGQGSLRQALFGDQIGAQAVANGWAGVLIHGCVRDVEILAGLPLGVLALAACPRRTERRDLGDVDVPVNFAGVAFVPGHWLYADANGVVVAATPLSLEIAGVEH.

Substrate-binding positions include 74 to 77 (GDQI) and R96. D97 contacts a divalent metal cation.

This sequence belongs to the class II aldolase/RraA-like family. In terms of assembly, homotrimer. Requires a divalent metal cation as cofactor.

The enzyme catalyses 4-hydroxy-4-methyl-2-oxoglutarate = 2 pyruvate. It carries out the reaction oxaloacetate + H(+) = pyruvate + CO2. In terms of biological role, catalyzes the aldol cleavage of 4-hydroxy-4-methyl-2-oxoglutarate (HMG) into 2 molecules of pyruvate. Also contains a secondary oxaloacetate (OAA) decarboxylase activity due to the common pyruvate enolate transition state formed following C-C bond cleavage in the retro-aldol and decarboxylation reactions. This chain is Putative 4-hydroxy-4-methyl-2-oxoglutarate aldolase, found in Xanthomonas campestris pv. campestris (strain 8004).